The chain runs to 101 residues: NADH-quinone oxidoreductase subunit K (101 aa).

A run of 3 helical transmembrane segments spans residues 4–24 (LGHY…GIFL), 30–50 (IVLL…FVAF), and 61–81 (VFVF…LAIL).

Belongs to the complex I subunit 4L family. As to quaternary structure, NDH-1 is composed of 14 different subunits. Subunits NuoA, H, J, K, L, M, N constitute the membrane sector of the complex.

The protein localises to the cell inner membrane. It catalyses the reaction a quinone + NADH + 5 H(+)(in) = a quinol + NAD(+) + 4 H(+)(out). Its function is as follows. NDH-1 shuttles electrons from NADH, via FMN and iron-sulfur (Fe-S) centers, to quinones in the respiratory chain. The immediate electron acceptor for the enzyme in this species is believed to be ubiquinone. Couples the redox reaction to proton translocation (for every two electrons transferred, four hydrogen ions are translocated across the cytoplasmic membrane), and thus conserves the redox energy in a proton gradient. The sequence is that of NADH-quinone oxidoreductase subunit K from Leptothrix cholodnii (strain ATCC 51168 / LMG 8142 / SP-6) (Leptothrix discophora (strain SP-6)).